The following is a 407-amino-acid chain: MQTTLKQQRASGRVSARQPFRSAAVARPRRSTVRVQASAAPLNDGLGFETMRDGIKVAAKETLLTPRFYTTDFDEMEQLFSKEINPNLDMEELNACLNEFRNDYNKVHFVRNETFKAAADKVTGETRRIFIEFLERSCTAEFSGFLLYKELARRMKASSPEVAEMFLLMSRDEARHAGFLNKALSDFNLALDLGFLTKNRTYTYFKPKFIIYATFLSEKIGYWRYITIYRHLQRNPDNQFYPLFEYFENWCQDENRHGDFLAACLKAKPELLNTFEAKLWSKFFCLSVYITMYLNDHQRTKFYESLGLNTRQFNQHVIIETNRATERLFPVVPDVEDPRFFEILNKMVDVNAKLVELSASSSPLAGLQKLPLLERMASYCLQLLFFKEKDVGSVDIAGSGASRNLAY.

A compositionally biased stretch (polar residues) spans 1-10 (MQTTLKQQRA). The segment at 1–28 (MQTTLKQQRASGRVSARQPFRSAAVARP) is disordered.

It belongs to the AcsF family. Fe cation is required as a cofactor.

The protein localises to the plastid. It localises to the chloroplast thylakoid membrane. The enzyme catalyses Mg-protoporphyrin IX 13-monomethyl ester + 3 NADPH + 3 O2 + 2 H(+) = 3,8-divinyl protochlorophyllide a + 3 NADP(+) + 5 H2O. It functions in the pathway porphyrin-containing compound metabolism; chlorophyll biosynthesis. In terms of biological role, catalyzes the formation of the isocyclic ring in chlorophyll biosynthesis under oxygen- and copper-deficient conditions. Mediates the cyclase reaction, which results in the formation of divinylprotochlorophyllide (Pchlide) characteristic of all chlorophylls from magnesium-protoporphyrin IX 13-monomethyl ester (MgPMME). This is Magnesium-protoporphyrin IX monomethyl ester [oxidative] cyclase 1, chloroplastic (CRD1) from Chlamydomonas reinhardtii (Chlamydomonas smithii).